Reading from the N-terminus, the 124-residue chain is Fluoride-specific ion channel FluC (124 aa).

3 helical membrane-spanning segments follow: residues 5-27, 70-90, and 95-115; these read LFVA…FMLQ, VGLL…LLLI, and WIKA…MVYL. 2 residues coordinate Na(+): glycine 74 and threonine 77.

Belongs to the fluoride channel Fluc/FEX (TC 1.A.43) family.

Its subcellular location is the cell inner membrane. The enzyme catalyses fluoride(in) = fluoride(out). Its activity is regulated as follows. Na(+) is not transported, but it plays an essential structural role and its presence is essential for fluoride channel function. Its function is as follows. Fluoride-specific ion channel. Important for reducing fluoride concentration in the cell, thus reducing its toxicity. The sequence is that of Fluoride-specific ion channel FluC from Shewanella sediminis (strain HAW-EB3).